The primary structure comprises 354 residues: Methylthioribose-1-phosphate isomerase (354 aa).

D246 acts as the Proton donor in catalysis.

This sequence belongs to the eIF-2B alpha/beta/delta subunits family. MtnA subfamily.

The protein localises to the cytoplasm. The protein resides in the nucleus. It catalyses the reaction 5-(methylsulfanyl)-alpha-D-ribose 1-phosphate = 5-(methylsulfanyl)-D-ribulose 1-phosphate. Its pathway is amino-acid biosynthesis; L-methionine biosynthesis via salvage pathway; L-methionine from S-methyl-5-thio-alpha-D-ribose 1-phosphate: step 1/6. In terms of biological role, catalyzes the interconversion of methylthioribose-1-phosphate (MTR-1-P) into methylthioribulose-1-phosphate (MTRu-1-P). In Xenopus laevis (African clawed frog), this protein is Methylthioribose-1-phosphate isomerase (mri1).